The sequence spans 198 residues: Dual specificity protein phosphatase 14 (198 aa).

In terms of domain architecture, Tyrosine-protein phosphatase spans glycine 26–glycine 167. Residue cysteine 111 is the Phosphocysteine intermediate of the active site.

It belongs to the protein-tyrosine phosphatase family. Non-receptor class dual specificity subfamily.

It carries out the reaction O-phospho-L-tyrosyl-[protein] + H2O = L-tyrosyl-[protein] + phosphate. The enzyme catalyses O-phospho-L-seryl-[protein] + H2O = L-seryl-[protein] + phosphate. The catalysed reaction is O-phospho-L-threonyl-[protein] + H2O = L-threonyl-[protein] + phosphate. Functionally, involved in the inactivation of MAP kinases. Dephosphorylates ERK, JNK and p38 MAP-kinases. Plays a negative role in TCR signaling by dephosphorylating MAP3K7 adapter TAB1 leading to its inactivation. This chain is Dual specificity protein phosphatase 14 (Dusp14), found in Mus musculus (Mouse).